Here is a 130-residue protein sequence, read N- to C-terminus: Small ribosomal subunit protein uS8 (130 aa).

Belongs to the universal ribosomal protein uS8 family. In terms of assembly, part of the 30S ribosomal subunit. Contacts proteins S5 and S12.

Its function is as follows. One of the primary rRNA binding proteins, it binds directly to 16S rRNA central domain where it helps coordinate assembly of the platform of the 30S subunit. The sequence is that of Small ribosomal subunit protein uS8 from Buchnera aphidicola subsp. Schizaphis graminum (strain Sg).